Consider the following 200-residue polypeptide: Large ribosomal subunit protein uL4 (200 aa).

Positions 43–72 (RAQKTRAEVSGSGKKPWRQKGTGRARSGDI) are disordered.

It belongs to the universal ribosomal protein uL4 family. In terms of assembly, part of the 50S ribosomal subunit.

One of the primary rRNA binding proteins, this protein initially binds near the 5'-end of the 23S rRNA. It is important during the early stages of 50S assembly. It makes multiple contacts with different domains of the 23S rRNA in the assembled 50S subunit and ribosome. Its function is as follows. Forms part of the polypeptide exit tunnel. The polypeptide is Large ribosomal subunit protein uL4 (Haemophilus ducreyi (strain 35000HP / ATCC 700724)).